The following is a 123-amino-acid chain: MRKPQRGYARQDRVKEQIMRELAELVRTGLKDPRAGFITVNEVEVTRDYSHATVFYTILNQDAREITEEVLEHARGHLRSELAKRIKLFKTPELHFKYDESLERGLNLSALIDQVAAEKPVED.

Belongs to the RbfA family. As to quaternary structure, monomer. Binds 30S ribosomal subunits, but not 50S ribosomal subunits or 70S ribosomes.

Its subcellular location is the cytoplasm. One of several proteins that assist in the late maturation steps of the functional core of the 30S ribosomal subunit. Associates with free 30S ribosomal subunits (but not with 30S subunits that are part of 70S ribosomes or polysomes). Required for efficient processing of 16S rRNA. May interact with the 5'-terminal helix region of 16S rRNA. This Neisseria meningitidis serogroup B (strain ATCC BAA-335 / MC58) protein is Ribosome-binding factor A.